The primary structure comprises 322 residues: Putative small RNA degrading nuclease 4 (322 aa).

Residues 75 to 213 (MLALDCEMVL…HDAAAAMKLA (139 aa)) enclose the Exonuclease domain.

The protein belongs to the REXO1/REXO3 family.

It is found in the nucleus. Its function is as follows. Putative 3'-5' exonuclease degrading single-stranded small RNAs. The polypeptide is Putative small RNA degrading nuclease 4 (SDN4) (Arabidopsis thaliana (Mouse-ear cress)).